The following is a 607-amino-acid chain: Type 3 secretion system secretin (607 aa).

The signal sequence occupies residues 1–33; the sequence is MAPACTTAHRRRAPLAAVLMLSLLPLLSPHADA. The segment at 277-332 is disordered; sequence ASSSDRVPVSPPLPGSGAAAAAGSPASVWPELSKGRRDESNPIDAGGGAELASDAP. The segment covering 291–306 has biased composition (low complexity); it reads GSGAAAAAGSPASVWP.

Belongs to the bacterial secretin family. T3SS SctC subfamily. In terms of assembly, the core secretion machinery of the T3SS is composed of approximately 20 different proteins, including cytoplasmic components, a base, an export apparatus and a needle. This subunit is part of the base, which anchors the injectisome in the bacterial cell envelope. Forms a stable homooligomeric complex.

The protein resides in the cell outer membrane. Component of the type III secretion system (T3SS), also called injectisome, which is used to inject bacterial effector proteins into eukaryotic host cells. Forms a ring-shaped multimeric structure with an apparent central pore in the outer membrane. Necessary for both basic pathogenicity and the induction of the hypersensitive response in resistant plants. The chain is Type 3 secretion system secretin from Xanthomonas euvesicatoria.